A 118-amino-acid polypeptide reads, in one-letter code: Putative pterin-4-alpha-carbinolamine dehydratase (118 aa).

It belongs to the pterin-4-alpha-carbinolamine dehydratase family.

It carries out the reaction (4aS,6R)-4a-hydroxy-L-erythro-5,6,7,8-tetrahydrobiopterin = (6R)-L-erythro-6,7-dihydrobiopterin + H2O. The polypeptide is Putative pterin-4-alpha-carbinolamine dehydratase (Azotobacter vinelandii (strain DJ / ATCC BAA-1303)).